A 338-amino-acid chain; its full sequence is MNAKIIASLAFTSMFSLSTLLSPAHAEEQEKALNFGIISTESQQNLKPQWTPFLQDMEKKLGVKVNAFFAPDYAGIIQGMRFNKVDIAWYGNLSAMEAVDRANGQVFAQTVAADGSPGYWSVLIVNKDSPINNLNDLLAKRKDLTFGNGDPNSTSGFLVPGYYVFAKNNISASDFKRTVNAGHETNALAVANKQVDVATNNTENLDKLKTSAPEKLKELKVIWKSPLIPGDPIVWRKNLSETTKDKIYDFFMNYGKTPEEKAVLERLGWAPFRASSDLQLVPIRQLALFKEMQGVKSNKGLNEQDKLAKTTEIQAQLDDLDRLNNALSAMSSVSKAVQ.

An N-terminal signal peptide occupies residues 1–26 (MNAKIIASLAFTSMFSLSTLLSPAHA).

The protein belongs to the phosphate/phosphite/phosphonate binding protein family. The complex is composed of two ATP-binding proteins (PhnC), two transmembrane proteins (PhnE) and a solute-binding protein (PhnD).

It is found in the periplasm. In terms of biological role, phosphonate binding protein that is part of the phosphonate uptake system. Exhibits high affinity for 2-aminoethylphosphonate, and somewhat less affinity to ethylphosphonate, methylphosphonate, phosphonoacetate and phenylphosphonate. This chain is Phosphonates-binding periplasmic protein (phnD), found in Escherichia coli (strain K12).